A 445-amino-acid chain; its full sequence is Inward rectifier potassium channel 4 (445 aa).

Over 1–55 the chain is Cytoplasmic; the sequence is MHGHSRNGQAHVPRRKRRNRFVKKNGQCNVYFANLSNKSQRYMADIFTTCVDTRW. A helical membrane pass occupies residues 56–80; sequence RYMLMIFSAAFLVSWLFFGLLFWCI. Residues 81 to 120 are Extracellular-facing; it reads AFFHGDLEASPGVPAAGGPAAGGGGAAPVAPKPCIMHVNG. A val/Gly/Ala/Pro stretch region spans residues 91–111; sequence PGVPAAGGPAAGGGGAAPVAP. The helical; Pore-forming intramembrane region spans 121–132; it reads FLGAFLFSVETQ. Residues 133–139 constitute an intramembrane region (pore-forming); it reads TTIGYGF. A Selectivity filter motif is present at residues 134 to 139; sequence TIGYGF. The Extracellular portion of the chain corresponds to 140–148; sequence RCVTEECPL. Residues 149–170 form a helical membrane-spanning segment; it reads AVIAVVVQSIVGCVIDSFMIGT. The Cytoplasmic portion of the chain corresponds to 171–445; it reads IMAKMARPKK…NISYRRESAI (275 aa). Residues 443–445 carry the PDZ-binding motif; that stretch reads SAI.

Belongs to the inward rectifier-type potassium channel (TC 1.A.2.1) family. KCNJ4 subfamily. As to quaternary structure, homomultimeric and heteromultimeric association with KCNJ2 and KCNJ12. Interacts with DLG2 and DLG4. Associates, via its PDZ-recognition domain, with a complex containing LIN7A, LIN7B, LIN7C, DLG1, CASK and APBA1. Interacts with TAX1BP3. TAX1BP3 competes with LIN7 family members for KCNJ4 binding. In terms of tissue distribution, heart, skeletal muscle, and several different brain regions including the hippocampus.

It is found in the cell membrane. It localises to the postsynaptic cell membrane. The protein localises to the cytoplasmic vesicle membrane. The catalysed reaction is K(+)(in) = K(+)(out). Its function is as follows. Inward rectifier potassium channels are characterized by a greater tendency to allow potassium to flow into the cell rather than out of it. Their voltage dependence is regulated by the concentration of extracellular potassium; as external potassium is raised, the voltage range of the channel opening shifts to more positive voltages. The inward rectification is mainly due to the blockage of outward current by internal magnesium. Can be blocked by extracellular barium and cesium. In Homo sapiens (Human), this protein is Inward rectifier potassium channel 4 (KCNJ4).